A 255-amino-acid chain; its full sequence is Indole-3-glycerol phosphate synthase (255 aa).

Belongs to the TrpC family.

The enzyme catalyses 1-(2-carboxyphenylamino)-1-deoxy-D-ribulose 5-phosphate + H(+) = (1S,2R)-1-C-(indol-3-yl)glycerol 3-phosphate + CO2 + H2O. The protein operates within amino-acid biosynthesis; L-tryptophan biosynthesis; L-tryptophan from chorismate: step 4/5. The chain is Indole-3-glycerol phosphate synthase from Streptococcus mutans serotype c (strain ATCC 700610 / UA159).